Consider the following 565-residue polypeptide: Polycomb protein EED (565 aa).

4 WD repeats span residues 89-133, 136-176, 185-224, and 240-278; these read DDGN…LYRT, GHGG…EKQP, GHSY…NEHM, and IHNN…SDDP. The segment at 417-488 is disordered; that stretch reads VKKAPGAAGS…SASPDPDSPF (72 aa). Over residues 429–450 the composition is skewed to low complexity; that stretch reads GTAANGGHNNNNNNNNNNNNNN. Over residues 451-468 the composition is skewed to polar residues; the sequence is HETGSQRSFSATNNLSNS. The WD 5 repeat unit spans residues 519-559; it reads IDGAFVGRQVGWSPEGEWCVVVGNGNRALIYQRWGKERGLG.

It belongs to the WD repeat ESC family. As to quaternary structure, component of the polycomb repressive complex 2 (PRC2) that consists of four core subunits icluding EZH2, EED, SUZ12, and RBBP4, among which EZH2 is the catalytic subunit and which minimally requires EED and SUZ12 for catalysis.

The protein localises to the nucleus. Functionally, component of the of the Polycomb Repressive Complex 2 (PRC2), a histone H3 lysine methyltransferase responsible for generating mono-, di-, and tri-methylation on Lys27 (H3K27me1, H3K27me2 and H3K27me3). The tri-methylated form is known to be critical in gene repression, and its proper placement is essential in defining repression patterns during development. EED is not a catalytic subunit but is required for the complex regulation of histone H3 lysine methylation by EZH2. The chain is Polycomb protein EED from Chaetomium thermophilum (strain DSM 1495 / CBS 144.50 / IMI 039719) (Thermochaetoides thermophila).